The following is a 254-amino-acid chain: NADPH-dependent ferric-chelate reductase (254 aa).

Residues 15–136 enclose the FAD-binding FR-type domain; sequence LRFRELTVLR…AGPRGSLVVP (122 aa).

The protein belongs to the SIP oxidoreductase family.

The protein localises to the cytoplasm. The catalysed reaction is 2 a Fe(II)-siderophore + NADP(+) + H(+) = 2 a Fe(III)-siderophore + NADPH. Functionally, plays a role in iron homeostasis under excess nickel conditions. This Escherichia coli (strain K12) protein is NADPH-dependent ferric-chelate reductase (yqjH).